The following is a 534-amino-acid chain: Zinc finger protein 671 (534 aa).

The KRAB domain maps to 49-120 (VVFEDVFVYF…DQVDMTSATE (72 aa)). The segment at 192 to 214 (YLCGACGKQFWFSTDFDQHQNQP) adopts a C2H2-type 1; degenerate zinc-finger fold. 9 C2H2-type zinc fingers span residues 285-307 (HRCGECGKAFTRKDTLARHQRIH), 313-335 (YECNECGKFFSQSYDLFKHQTVH), 341-363 (YECSECGKFFRQISGLIEHRRVH), 369-391 (YQCGKCGKFFSSKSNLIRHQEVH), 397-419 (YVCSECGKEFSRKHTLVLHQRTH), 425-447 (YECSECGKAFSQSSHLNVHWRIH), 451-473 (YECSRCGKAFSCISKLIQHQKVH), 479-501 (YECSKCGKAFTQRPNLIRHWKVH), and 507-529 (YVCSECGREFIRKQTLVLHQRVH).

The protein belongs to the krueppel C2H2-type zinc-finger protein family.

The protein resides in the nucleus. Functionally, may be involved in transcriptional regulation. The polypeptide is Zinc finger protein 671 (ZNF671) (Homo sapiens (Human)).